Here is a 329-residue protein sequence, read N- to C-terminus: Probable aryl-alcohol dehydrogenase AAD4 (329 aa).

Y30 serves as the catalytic Proton donor. H105 is a binding site for substrate. Position 190–200 (190–200 (DVMGGGRFQSK)) interacts with NADP(+).

The protein belongs to the aldo/keto reductase family. Aldo/keto reductase 2 subfamily.

This chain is Probable aryl-alcohol dehydrogenase AAD4 (AAD4), found in Saccharomyces cerevisiae (strain ATCC 204508 / S288c) (Baker's yeast).